Consider the following 395-residue polypeptide: Acid ceramidase (395 aa).

An N-terminal signal peptide occupies residues 1–21; sequence MPGRSRVALVLLAAAVSCAVA. Cysteine 31 and cysteine 340 form a disulfide bridge. Residue cysteine 143 is the Nucleophile of the active site. Residues asparagine 195, asparagine 259, asparagine 286, and asparagine 342 are each glycosylated (N-linked (GlcNAc...) asparagine). A disulfide bridge links cysteine 388 with cysteine 392.

Belongs to the acid ceramidase family. As to quaternary structure, heterodimer; disulfide-linked. The heterodimer is composed of the disulfide-linked alpha and beta chains produced by autocatalytic cleavage of the precursor. N-glycosylated. Post-translationally, proteolytically cleaved into two chains alpha and beta that remain associated via a disulfide bond. Cleavage gives rise to a conformation change that activates the enzyme. The same catalytic Cys residue mediates the autoproteolytic cleavage and subsequent hydrolysis of lipid substrates. The beta chain may undergo an additional C-terminal processing.

Its subcellular location is the lysosome. The protein localises to the secreted. It catalyses the reaction an N-acylsphing-4-enine + H2O = sphing-4-enine + a fatty acid. It carries out the reaction N-dodecanoylsphing-4-enine + H2O = dodecanoate + sphing-4-enine. The catalysed reaction is N-tetradecanoylsphing-4-enine + H2O = tetradecanoate + sphing-4-enine. The enzyme catalyses N-hexadecanoylsphing-4-enine + H2O = sphing-4-enine + hexadecanoate. It catalyses the reaction N-octadecanoylsphing-4-enine + H2O = sphing-4-enine + octadecanoate. It carries out the reaction N-dodecanoyl-(4R)-hydroxysphinganine + H2O = (4R)-hydroxysphinganine + dodecanoate. The catalysed reaction is N-(dodecanoyl)-sphinganine + H2O = dodecanoate + sphinganine. The enzyme catalyses N-(acetyl)-sphing-4-enine + H2O = sphing-4-enine + acetate. It catalyses the reaction N-(hexanoyl)sphing-4-enine + H2O = hexanoate + sphing-4-enine. It carries out the reaction N-octanoylsphing-4-enine + H2O = octanoate + sphing-4-enine. The catalysed reaction is N-(9Z-octadecenoyl)-sphing-4-enine + H2O = sphing-4-enine + (9Z)-octadecenoate. The enzyme catalyses N-dodecanoylethanolamine + H2O = dodecanoate + ethanolamine. It participates in lipid metabolism; sphingolipid metabolism. Its function is as follows. Lysosomal ceramidase that hydrolyzes sphingolipid ceramides into sphingosine and free fatty acids at acidic pH. Ceramides, sphingosine, and its phosphorylated form sphingosine-1-phosphate are bioactive lipids that mediate cellular signaling pathways regulating several biological processes including cell proliferation, apoptosis and differentiation. Has a higher catalytic efficiency towards C12-ceramides versus other ceramides. Also catalyzes the reverse reaction allowing the synthesis of ceramides from fatty acids and sphingosine. For the reverse synthetic reaction, the natural sphingosine D-erythro isomer is more efficiently utilized as a substrate compared to D-erythro-dihydrosphingosine and D-erythro-phytosphingosine, while the fatty acids with chain lengths of 12 or 14 carbons are the most efficiently used. Also has an N-acylethanolamine hydrolase activity. By regulating the levels of ceramides, sphingosine and sphingosine-1-phosphate in the epidermis, mediates the calcium-induced differentiation of epidermal keratinocytes. Also indirectly regulates tumor necrosis factor/TNF-induced apoptosis. By regulating the intracellular balance between ceramides and sphingosine, in adrenocortical cells, probably also acts as a regulator of steroidogenesis. The chain is Acid ceramidase from Pan troglodytes (Chimpanzee).